The primary structure comprises 175 residues: Shikimate kinase (175 aa).

14-19 (GAGKST) provides a ligand contact to ATP. Residue Ser18 coordinates Mg(2+). The substrate site is built by Asp36, Arg60, and Gly82. Arg120 lines the ATP pocket. A substrate-binding site is contributed by Arg140. Gln157 provides a ligand contact to ATP.

Belongs to the shikimate kinase family. As to quaternary structure, monomer. Requires Mg(2+) as cofactor.

The protein localises to the cytoplasm. It carries out the reaction shikimate + ATP = 3-phosphoshikimate + ADP + H(+). It functions in the pathway metabolic intermediate biosynthesis; chorismate biosynthesis; chorismate from D-erythrose 4-phosphate and phosphoenolpyruvate: step 5/7. Catalyzes the specific phosphorylation of the 3-hydroxyl group of shikimic acid using ATP as a cosubstrate. This is Shikimate kinase from Mannheimia succiniciproducens (strain KCTC 0769BP / MBEL55E).